We begin with the raw amino-acid sequence, 440 residues long: Enolase (440 aa).

Gln-163 is a binding site for (2R)-2-phosphoglycerate. The active-site Proton donor is Glu-205. Mg(2+)-binding residues include Asp-242, Glu-288, and Asp-315. The (2R)-2-phosphoglycerate site is built by Lys-340, Arg-369, Ser-370, and Lys-391. Residue Lys-340 is the Proton acceptor of the active site.

This sequence belongs to the enolase family. The cofactor is Mg(2+).

It localises to the cytoplasm. The protein resides in the secreted. The protein localises to the cell surface. It catalyses the reaction (2R)-2-phosphoglycerate = phosphoenolpyruvate + H2O. It functions in the pathway carbohydrate degradation; glycolysis; pyruvate from D-glyceraldehyde 3-phosphate: step 4/5. In terms of biological role, catalyzes the reversible conversion of 2-phosphoglycerate (2-PG) into phosphoenolpyruvate (PEP). It is essential for the degradation of carbohydrates via glycolysis. This Limosilactobacillus fermentum (strain NBRC 3956 / LMG 18251) (Lactobacillus fermentum) protein is Enolase.